The chain runs to 547 residues: Glucose-6-phosphate isomerase (547 aa).

E354 acts as the Proton donor in catalysis. Residues H385 and K513 contribute to the active site.

It belongs to the GPI family.

Its subcellular location is the cytoplasm. The catalysed reaction is alpha-D-glucose 6-phosphate = beta-D-fructose 6-phosphate. It participates in carbohydrate biosynthesis; gluconeogenesis. It functions in the pathway carbohydrate degradation; glycolysis; D-glyceraldehyde 3-phosphate and glycerone phosphate from D-glucose: step 2/4. Catalyzes the reversible isomerization of glucose-6-phosphate to fructose-6-phosphate. In Erwinia tasmaniensis (strain DSM 17950 / CFBP 7177 / CIP 109463 / NCPPB 4357 / Et1/99), this protein is Glucose-6-phosphate isomerase.